Consider the following 493-residue polypeptide: Galactose-1-phosphate uridylyltransferase (493 aa).

The protein belongs to the galactose-1-phosphate uridylyltransferase type 2 family.

It localises to the cytoplasm. The enzyme catalyses alpha-D-galactose 1-phosphate + UDP-alpha-D-glucose = alpha-D-glucose 1-phosphate + UDP-alpha-D-galactose. Its pathway is carbohydrate metabolism; galactose metabolism. In Streptococcus salivarius, this protein is Galactose-1-phosphate uridylyltransferase.